The primary structure comprises 118 residues: Small ribosomal subunit protein uS13 (118 aa).

Positions 94-118 (SLPVRGQRSKTNARTRKGPRKAIKK) are disordered.

Belongs to the universal ribosomal protein uS13 family. In terms of assembly, part of the 30S ribosomal subunit. Forms a loose heterodimer with protein S19. Forms two bridges to the 50S subunit in the 70S ribosome.

Located at the top of the head of the 30S subunit, it contacts several helices of the 16S rRNA. In the 70S ribosome it contacts the 23S rRNA (bridge B1a) and protein L5 of the 50S subunit (bridge B1b), connecting the 2 subunits; these bridges are implicated in subunit movement. Contacts the tRNAs in the A and P-sites. This is Small ribosomal subunit protein uS13 from Psychromonas ingrahamii (strain DSM 17664 / CCUG 51855 / 37).